The sequence spans 238 residues: 1-(5-phosphoribosyl)-5-[(5-phosphoribosylamino)methylideneamino] imidazole-4-carboxamide isomerase (238 aa).

Catalysis depends on D8, which acts as the Proton acceptor. D129 functions as the Proton donor in the catalytic mechanism.

The protein belongs to the HisA/HisF family.

It is found in the cytoplasm. The enzyme catalyses 1-(5-phospho-beta-D-ribosyl)-5-[(5-phospho-beta-D-ribosylamino)methylideneamino]imidazole-4-carboxamide = 5-[(5-phospho-1-deoxy-D-ribulos-1-ylimino)methylamino]-1-(5-phospho-beta-D-ribosyl)imidazole-4-carboxamide. The protein operates within amino-acid biosynthesis; L-histidine biosynthesis; L-histidine from 5-phospho-alpha-D-ribose 1-diphosphate: step 4/9. The polypeptide is 1-(5-phosphoribosyl)-5-[(5-phosphoribosylamino)methylideneamino] imidazole-4-carboxamide isomerase (Brachyspira hyodysenteriae (strain ATCC 49526 / WA1)).